The sequence spans 309 residues: Pantoate--beta-alanine ligase (309 aa).

The protein belongs to the pantothenate synthetase family.

Its subcellular location is the cytoplasm. The protein resides in the nucleus. The catalysed reaction is (R)-pantoate + beta-alanine + ATP = (R)-pantothenate + AMP + diphosphate + H(+). Its pathway is cofactor biosynthesis; (R)-pantothenate biosynthesis; (R)-pantothenate from (R)-pantoate and beta-alanine: step 1/1. Required for pantothenic acid biosynthesis. The chain is Pantoate--beta-alanine ligase (PAN6) from Saccharomyces cerevisiae (strain ATCC 204508 / S288c) (Baker's yeast).